The sequence spans 122 residues: ATP-dependent Clp protease adapter protein ClpS (122 aa).

The tract at residues 1–33 (MHAPSQIRLTFNQDHPEPHEHEDEGAGLAVQES) is disordered. A compositionally biased stretch (basic and acidic residues) spans 14-24 (DHPEPHEHEDE).

This sequence belongs to the ClpS family. In terms of assembly, binds to the N-terminal domain of the chaperone ClpA.

Its function is as follows. Involved in the modulation of the specificity of the ClpAP-mediated ATP-dependent protein degradation. The sequence is that of ATP-dependent Clp protease adapter protein ClpS from Pseudomonas aeruginosa (strain ATCC 15692 / DSM 22644 / CIP 104116 / JCM 14847 / LMG 12228 / 1C / PRS 101 / PAO1).